The following is an 87-amino-acid chain: Kappa-bungarotoxin (87 aa).

The signal sequence occupies residues 1 to 21 (MKTLLLTLVVVTIVCLDLGYT). 5 disulfides stabilise this stretch: Cys-24/Cys-42, Cys-35/Cys-63, Cys-48/Cys-52, Cys-67/Cys-79, and Cys-80/Cys-85.

It belongs to the three-finger toxin family. Long-chain subfamily. Kappa-neurotoxin sub-subfamily. In terms of assembly, homodimer and heterodimer; non-covalently linked. Expressed by the venom gland.

It is found in the secreted. Functionally, postsynaptic neurotoxin that binds and inhibits neuronal nicotinic acetylcholine receptors (nAChR) with high affinity (IC(50)&lt;100 nM). Is a selective, and slowly reversible antagonist of alpha-3/CHRNA3-containing and some alpha-4/CHRNA4-containing AChRs. The sequence is that of Kappa-bungarotoxin from Bungarus multicinctus (Many-banded krait).